The following is a 373-amino-acid chain: Dual-specificity RNA methyltransferase RlmN (373 aa).

Catalysis depends on Glu94, which acts as the Proton acceptor. Residues 100–339 (EDDRATLCVS…VIVRKTRGDD (240 aa)) form the Radical SAM core domain. Cysteines 107 and 344 form a disulfide. Residues Cys114, Cys118, and Cys121 each coordinate [4Fe-4S] cluster. S-adenosyl-L-methionine contacts are provided by residues 168 to 169 (GE), Ser200, 222 to 224 (SIH), and Asn301. Cys344 acts as the S-methylcysteine intermediate in catalysis.

Belongs to the radical SAM superfamily. RlmN family. Requires [4Fe-4S] cluster as cofactor.

Its subcellular location is the cytoplasm. It carries out the reaction adenosine(2503) in 23S rRNA + 2 reduced [2Fe-2S]-[ferredoxin] + 2 S-adenosyl-L-methionine = 2-methyladenosine(2503) in 23S rRNA + 5'-deoxyadenosine + L-methionine + 2 oxidized [2Fe-2S]-[ferredoxin] + S-adenosyl-L-homocysteine. The enzyme catalyses adenosine(37) in tRNA + 2 reduced [2Fe-2S]-[ferredoxin] + 2 S-adenosyl-L-methionine = 2-methyladenosine(37) in tRNA + 5'-deoxyadenosine + L-methionine + 2 oxidized [2Fe-2S]-[ferredoxin] + S-adenosyl-L-homocysteine. In terms of biological role, specifically methylates position 2 of adenine 2503 in 23S rRNA and position 2 of adenine 37 in tRNAs. m2A2503 modification seems to play a crucial role in the proofreading step occurring at the peptidyl transferase center and thus would serve to optimize ribosomal fidelity. The chain is Dual-specificity RNA methyltransferase RlmN from Shewanella sp. (strain W3-18-1).